The sequence spans 311 residues: Putative S-adenosyl-L-methionine-dependent methyltransferase MSMEG_0095/MSMEI_0092 (311 aa).

S-adenosyl-L-methionine contacts are provided by residues Asp134 and 163-164 (DL).

The protein belongs to the UPF0677 family.

In terms of biological role, exhibits S-adenosyl-L-methionine-dependent methyltransferase activity. This is Putative S-adenosyl-L-methionine-dependent methyltransferase MSMEG_0095/MSMEI_0092 from Mycolicibacterium smegmatis (strain ATCC 700084 / mc(2)155) (Mycobacterium smegmatis).